We begin with the raw amino-acid sequence, 232 residues long: tRNA pseudouridine synthase B (232 aa).

Residue Asp-53 is the Nucleophile of the active site.

It belongs to the pseudouridine synthase TruB family. Type 1 subfamily.

The enzyme catalyses uridine(55) in tRNA = pseudouridine(55) in tRNA. Responsible for synthesis of pseudouridine from uracil-55 in the psi GC loop of transfer RNAs. This is tRNA pseudouridine synthase B from Malacoplasma penetrans (strain HF-2) (Mycoplasma penetrans).